The chain runs to 547 residues: Dihydroxy-acid dehydratase (547 aa).

Asp-78 serves as a coordination point for Mg(2+). Residue Cys-119 coordinates [2Fe-2S] cluster. The Mg(2+) site is built by Asp-120 and Lys-121. Lys-121 bears the N6-carboxylysine mark. Cys-191 is a [2Fe-2S] cluster binding site. A Mg(2+)-binding site is contributed by Glu-439. Ser-464 serves as the catalytic Proton acceptor.

This sequence belongs to the IlvD/Edd family. As to quaternary structure, homodimer. [2Fe-2S] cluster is required as a cofactor. Mg(2+) serves as cofactor.

The enzyme catalyses (2R)-2,3-dihydroxy-3-methylbutanoate = 3-methyl-2-oxobutanoate + H2O. It carries out the reaction (2R,3R)-2,3-dihydroxy-3-methylpentanoate = (S)-3-methyl-2-oxopentanoate + H2O. Its pathway is amino-acid biosynthesis; L-isoleucine biosynthesis; L-isoleucine from 2-oxobutanoate: step 3/4. It participates in amino-acid biosynthesis; L-valine biosynthesis; L-valine from pyruvate: step 3/4. Functions in the biosynthesis of branched-chain amino acids. Catalyzes the dehydration of (2R,3R)-2,3-dihydroxy-3-methylpentanoate (2,3-dihydroxy-3-methylvalerate) into 2-oxo-3-methylpentanoate (2-oxo-3-methylvalerate) and of (2R)-2,3-dihydroxy-3-methylbutanoate (2,3-dihydroxyisovalerate) into 2-oxo-3-methylbutanoate (2-oxoisovalerate), the penultimate precursor to L-isoleucine and L-valine, respectively. This is Dihydroxy-acid dehydratase from Methanospirillum hungatei JF-1 (strain ATCC 27890 / DSM 864 / NBRC 100397 / JF-1).